We begin with the raw amino-acid sequence, 314 residues long: uncharacterized protein (314 aa).

Positions 1 to 20 are cleaved as a signal peptide; the sequence is MKKRAGIWAALLLAAVMLAG. Cys21 carries N-palmitoyl cysteine lipidation. The S-diacylglycerol cysteine moiety is linked to residue Cys21. In terms of domain architecture, Fe/B12 periplasmic-binding spans 59-311; the sequence is KIVSLMPSNT…ELAESIYPDT (253 aa).

The protein belongs to the bacterial solute-binding protein 8 family. As to quaternary structure, the complex is composed of two ATP-binding proteins (YvrA), two transmembrane proteins (YvrB) and a solute-binding protein (YvrC).

It is found in the cell membrane. Functionally, probably part of an ABC transporter complex. This is an uncharacterized protein from Bacillus subtilis (strain 168).